Consider the following 199-residue polypeptide: Chaperone protein TorD (199 aa).

Belongs to the TorD/DmsD family. TorD subfamily.

Its subcellular location is the cytoplasm. In terms of biological role, involved in the biogenesis of TorA. Acts on TorA before the insertion of the molybdenum cofactor and, as a result, probably favors a conformation of the apoenzyme that is competent for acquiring the cofactor. This chain is Chaperone protein TorD, found in Escherichia coli O81 (strain ED1a).